The sequence spans 276 residues: MDICGVDSEGKEFNSVQEMWREEIGEGDETKKTQWYRDGVSYWEGVEASVDGVLGGYGHVNDADIIGSEVFLKTLLQERLVNNVGANQHLVALDCGSGIGRITKNLLIRYFNEVDLLEPVAQFLDAARENLASAGSETHKATNFFCVPLQEFTPAAGRYDVIWVQWCIGHLTDNDFVSFFNRAKGYLKPGGFFVVKENLAKNGFVLDKEDHSITRSDPYFKQLFRQCGLHLYRTKDQKGLPQELFAVKMYALTVDTPPKIHRTRSKTRSNRPQIIK.

S-adenosyl-L-methionine is bound by residues Gly96, Arg101, 118 to 120 (EPV), 149 to 150 (LQ), and Gln165.

It belongs to the methyltransferase superfamily. NTM1 family.

The catalysed reaction is N-terminal L-alanyl-L-prolyl-L-lysyl-[protein] + 3 S-adenosyl-L-methionine = N-terminal N,N,N-trimethyl-L-alanyl-L-prolyl-L-lysyl-[protein] + 3 S-adenosyl-L-homocysteine + 3 H(+). The enzyme catalyses N-terminal L-seryl-L-prolyl-L-lysyl-[protein] + 3 S-adenosyl-L-methionine = N-terminal N,N,N-trimethyl-L-seryl-L-prolyl-L-lysyl-[protein] + 3 S-adenosyl-L-homocysteine + 3 H(+). It catalyses the reaction N-terminal L-prolyl-L-prolyl-L-lysyl-[protein] + 2 S-adenosyl-L-methionine = N-terminal N,N-dimethyl-L-prolyl-L-prolyl-L-lysyl-[protein] + 2 S-adenosyl-L-homocysteine + 2 H(+). Alpha-N-methyltransferase that methylates the N-terminus of target proteins containing the N-terminal motif [Ala/Pro/Ser]-Pro-Lys when the initiator Met is cleaved. Specifically catalyzes mono-, di- or tri-methylation of exposed alpha-amino group of Ala or Ser residue in the [Ala/Ser]-Pro-Lys motif and mono- or di-methylation of Pro in the Pro-Pro-Lys motif. The protein is Alpha N-terminal protein methyltransferase 1 of Arabidopsis thaliana (Mouse-ear cress).